Reading from the N-terminus, the 311-residue chain is NAD kinase (311 aa).

Asp88 serves as the catalytic Proton acceptor. Residues 88–89 (DG), 162–163 (NE), Arg190, Asp192, Val200, and 203–208 (TAHNLS) each bind NAD(+).

It belongs to the NAD kinase family. A divalent metal cation serves as cofactor.

It localises to the cytoplasm. It carries out the reaction NAD(+) + ATP = ADP + NADP(+) + H(+). Involved in the regulation of the intracellular balance of NAD and NADP, and is a key enzyme in the biosynthesis of NADP. Catalyzes specifically the phosphorylation on 2'-hydroxyl of the adenosine moiety of NAD to yield NADP. The sequence is that of NAD kinase from Rhodopirellula baltica (strain DSM 10527 / NCIMB 13988 / SH1).